Reading from the N-terminus, the 468-residue chain is Flavin-containing monooxygenase FMO GS-OX-like 1 (468 aa).

Residue 16–21 participates in FAD binding; sequence GLGAAG. An NADP(+)-binding site is contributed by 211–216; sequence GSQASG.

The protein belongs to the FMO family. FAD is required as a cofactor.

Its function is as follows. Catalyzes the conversion of methylthioalkyl glucosinolates of any chain length into methylsulfinylalkyl glucosinolates. In Arabidopsis thaliana (Mouse-ear cress), this protein is Flavin-containing monooxygenase FMO GS-OX-like 1.